The following is a 142-amino-acid chain: Large ribosomal subunit protein uL16 (142 aa).

This sequence belongs to the universal ribosomal protein uL16 family. As to quaternary structure, part of the 50S ribosomal subunit.

Its function is as follows. Binds 23S rRNA and is also seen to make contacts with the A and possibly P site tRNAs. This chain is Large ribosomal subunit protein uL16, found in Thermotoga sp. (strain RQ2).